The sequence spans 128 residues: Large ribosomal subunit protein bL12c (128 aa).

This sequence belongs to the bacterial ribosomal protein bL12 family. As to quaternary structure, homodimer. Part of the ribosomal stalk of the 50S ribosomal subunit. Forms a multimeric L10(L12)X complex, where L10 forms an elongated spine to which 2 to 4 L12 dimers bind in a sequential fashion. Binds GTP-bound translation factors.

It localises to the plastid. Its subcellular location is the chloroplast. In terms of biological role, forms part of the ribosomal stalk which helps the ribosome interact with GTP-bound translation factors. Is thus essential for accurate translation. The protein is Large ribosomal subunit protein bL12c of Phaeodactylum tricornutum (strain CCAP 1055/1).